Consider the following 364-residue polypeptide: Aminomethyltransferase (364 aa).

The protein belongs to the GcvT family. As to quaternary structure, the glycine cleavage system is composed of four proteins: P, T, L and H.

It catalyses the reaction N(6)-[(R)-S(8)-aminomethyldihydrolipoyl]-L-lysyl-[protein] + (6S)-5,6,7,8-tetrahydrofolate = N(6)-[(R)-dihydrolipoyl]-L-lysyl-[protein] + (6R)-5,10-methylene-5,6,7,8-tetrahydrofolate + NH4(+). In terms of biological role, the glycine cleavage system catalyzes the degradation of glycine. This is Aminomethyltransferase from Escherichia coli O157:H7.